The primary structure comprises 296 residues: tRNA dimethylallyltransferase (296 aa).

Residue 11 to 18 (GPTAVGKT) coordinates ATP. 13–18 (TAVGKT) provides a ligand contact to substrate. Residues 36–39 (DSQQ) are interaction with substrate tRNA.

This sequence belongs to the IPP transferase family. As to quaternary structure, monomer. Mg(2+) is required as a cofactor.

It catalyses the reaction adenosine(37) in tRNA + dimethylallyl diphosphate = N(6)-dimethylallyladenosine(37) in tRNA + diphosphate. Its function is as follows. Catalyzes the transfer of a dimethylallyl group onto the adenine at position 37 in tRNAs that read codons beginning with uridine, leading to the formation of N6-(dimethylallyl)adenosine (i(6)A). The protein is tRNA dimethylallyltransferase of Streptococcus equi subsp. equi (strain 4047).